The chain runs to 264 residues: Glutamate racemase (264 aa).

Residues 9 to 10 (DS) and 41 to 42 (YG) contribute to the substrate site. The Proton donor/acceptor role is filled by cysteine 72. Residue 73-74 (NT) participates in substrate binding. Cysteine 183 (proton donor/acceptor) is an active-site residue. 184–185 (TH) serves as a coordination point for substrate.

It belongs to the aspartate/glutamate racemases family.

The catalysed reaction is L-glutamate = D-glutamate. It participates in cell wall biogenesis; peptidoglycan biosynthesis. In terms of biological role, provides the (R)-glutamate required for cell wall biosynthesis. The sequence is that of Glutamate racemase from Geobacillus sp. (strain WCH70).